Here is a 504-residue protein sequence, read N- to C-terminus: 13S globulin seed storage protein 2 (504 aa).

The first 20 residues, 1–20 (MSTKLILSFSLCLMVLSCSA), serve as a signal peptide directing secretion. 2 disulfides stabilise this stretch: Cys46–Cys79 and Cys122–Cys320. The Cupin type-1 1 domain occupies 51–265 (LTASEPSRRV…FRDVDRETIS (215 aa)). 3 disordered regions span residues 128 to 158 (SDSEFEYPQSQRGRHSRQSESEEESSRGDQH), 214 to 237 (GQSQRETREEGSDRQSRESDDDEA), and 289 to 314 (QDFEEEYERERGDRRRGQGGSGRSNG). Basic and acidic residues-rich tracts occupy residues 144–158 (RQSESEEESSRGDQH) and 218–231 (RETREEGSDRQSRE). A Cupin type-1 2 domain is found at 326–475 (RNFNTPTNTY…SYDISTKEAY (150 aa)).

Belongs to the 11S seed storage protein (globulins) family. As to quaternary structure, hexamer; each subunit is composed of an acidic and a basic chain derived from a single precursor and linked by a disulfide bond.

Its function is as follows. Seed storage protein. This is 13S globulin seed storage protein 2 (FA18) from Fagopyrum esculentum (Common buckwheat).